We begin with the raw amino-acid sequence, 72 residues long: Translation initiation factor IF-1 (72 aa).

The 72-residue stretch at 1–72 (MSKDDCIEFE…TKGRIIYRMK (72 aa)) folds into the S1-like domain.

The protein belongs to the IF-1 family. In terms of assembly, component of the 30S ribosomal translation pre-initiation complex which assembles on the 30S ribosome in the order IF-2 and IF-3, IF-1 and N-formylmethionyl-tRNA(fMet); mRNA recruitment can occur at any time during PIC assembly.

It localises to the cytoplasm. Its function is as follows. One of the essential components for the initiation of protein synthesis. Stabilizes the binding of IF-2 and IF-3 on the 30S subunit to which N-formylmethionyl-tRNA(fMet) subsequently binds. Helps modulate mRNA selection, yielding the 30S pre-initiation complex (PIC). Upon addition of the 50S ribosomal subunit IF-1, IF-2 and IF-3 are released leaving the mature 70S translation initiation complex. In Xylella fastidiosa (strain Temecula1 / ATCC 700964), this protein is Translation initiation factor IF-1.